We begin with the raw amino-acid sequence, 317 residues long: Ribonuclease Z (317 aa).

Zn(2+)-binding residues include His-61, His-63, Asp-65, His-66, His-139, Asp-210, and His-268. Residue Asp-65 is the Proton acceptor of the active site.

The protein belongs to the RNase Z family. In terms of assembly, homodimer. Zn(2+) serves as cofactor.

The enzyme catalyses Endonucleolytic cleavage of RNA, removing extra 3' nucleotides from tRNA precursor, generating 3' termini of tRNAs. A 3'-hydroxy group is left at the tRNA terminus and a 5'-phosphoryl group is left at the trailer molecule.. With respect to regulation, inhibited by high salt concentrations. In terms of biological role, zinc phosphodiesterase, which displays some tRNA 3'-processing endonuclease activity. Probably involved in tRNA maturation, by removing a 3'-trailer from precursor tRNA. Can also catalyze the 5' end cleavage of the 5S rRNA. The sequence is that of Ribonuclease Z from Haloferax volcanii (strain ATCC 29605 / DSM 3757 / JCM 8879 / NBRC 14742 / NCIMB 2012 / VKM B-1768 / DS2) (Halobacterium volcanii).